The primary structure comprises 76 residues: MSVEEKISKIIMDQLGVSAEEVKPEASFVEDLGADSLDLTELIMAMEEEFGIEIDDDDAQKILKVQDAIAYIKNKQ.

One can recognise a Carrier domain in the interval 1–76; that stretch reads MSVEEKISKI…DAIAYIKNKQ (76 aa). S36 carries the post-translational modification O-(pantetheine 4'-phosphoryl)serine.

It belongs to the acyl carrier protein (ACP) family. 4'-phosphopantetheine is transferred from CoA to a specific serine of apo-ACP by AcpS. This modification is essential for activity because fatty acids are bound in thioester linkage to the sulfhydryl of the prosthetic group.

Its subcellular location is the cytoplasm. The protein operates within lipid metabolism; fatty acid biosynthesis. Carrier of the growing fatty acid chain in fatty acid biosynthesis. This Nitratidesulfovibrio vulgaris (strain DSM 19637 / Miyazaki F) (Desulfovibrio vulgaris) protein is Acyl carrier protein.